The following is a 271-amino-acid chain: Formamidopyrimidine-DNA glycosylase (271 aa).

Proline 2 functions as the Schiff-base intermediate with DNA in the catalytic mechanism. Glutamate 3 functions as the Proton donor in the catalytic mechanism. Lysine 58 serves as the catalytic Proton donor; for beta-elimination activity. Histidine 91, arginine 110, and arginine 152 together coordinate DNA. An FPG-type zinc finger spans residues 237-271 (NVYGRGGKACKKCRKPLTEKKLGQRTTVYCTHCQK). The active-site Proton donor; for delta-elimination activity is arginine 261.

Belongs to the FPG family. In terms of assembly, monomer. It depends on Zn(2+) as a cofactor.

It carries out the reaction Hydrolysis of DNA containing ring-opened 7-methylguanine residues, releasing 2,6-diamino-4-hydroxy-5-(N-methyl)formamidopyrimidine.. It catalyses the reaction 2'-deoxyribonucleotide-(2'-deoxyribose 5'-phosphate)-2'-deoxyribonucleotide-DNA = a 3'-end 2'-deoxyribonucleotide-(2,3-dehydro-2,3-deoxyribose 5'-phosphate)-DNA + a 5'-end 5'-phospho-2'-deoxyribonucleoside-DNA + H(+). Involved in base excision repair of DNA damaged by oxidation or by mutagenic agents. Acts as a DNA glycosylase that recognizes and removes damaged bases. Has a preference for oxidized purines, such as 7,8-dihydro-8-oxoguanine (8-oxoG). Has AP (apurinic/apyrimidinic) lyase activity and introduces nicks in the DNA strand. Cleaves the DNA backbone by beta-delta elimination to generate a single-strand break at the site of the removed base with both 3'- and 5'-phosphates. The sequence is that of Formamidopyrimidine-DNA glycosylase from Saccharophagus degradans (strain 2-40 / ATCC 43961 / DSM 17024).